The primary structure comprises 341 residues: MPKPNHSTAPLPFPILIGDIGGTNARFSILTDAYAEPKQFPNVRTADFATIDEAIQQGVLDKTAVQPRSAILAVAGPINDDEIPLTNCDWVVRPKTMIEGLGMEDVLVVNDFEAQALAVAALSDENRERIGEATGDMIASRVVLGPGTGLGVGGLVHAQHSWIPVPGEGGHVDLGPRSKRDYQIFPHIETIEGRVSAEQILCGRGLVNLYHAICVVDGIQPTMKDPADITSHALAGSDKAAVETVSLFATYLGRVAGDMAMVFMARGGVYLSGGISQKILPALRRPEFRLAFEDKAPHTALLRTIPTYVVTHPLAALAGLSSYARMPANFGVSTEGRRWRR.

Residue Gly-18 to Thr-23 coordinates ATP.

This sequence belongs to the bacterial glucokinase family.

It is found in the cytoplasm. It carries out the reaction D-glucose + ATP = D-glucose 6-phosphate + ADP + H(+). This Rhizobium leguminosarum bv. trifolii (strain WSM2304) protein is Glucokinase.